Consider the following 1055-residue polypeptide: MKDQGSSGVSPAPGEGEKKAINSELWHACAGPLVSLPPVGSLVVYFPQGHSEQVAASMHKELDNIPGYPSLPSKLICKLLSLTLHADSETDEVYAQMTLQPVNKYDRDAMLASELGLKQNKQPAEFFCKTLTASDTSTHGGFSVPRRAAEKIFPPLDFTMQPPAQELIAKDLHDISWKFRHIYRGQPKRHLLTTGWSVFVSTKRLLAGDSVLFIRDEKSQLLLGIRRATRPQPALSSSVLSSDSMHIGILAAAAHAAANSSPFTIFYNPRASPSEFVIPLAKYNKALYTQVSLGMRFRMLFETEDSGVRRYMGTITGIGDLDPVRWKNSHWRNLQVGWDESTASERRTRVSIWEIEPVATPFYICPPPFFRPKLPKQPGMPDDENEVESAFKRAMPWLADDFALKDVQSALFPGLSLVQWMAMQQNPQMLTAASQTVQSPYLNSNALAMQDVMGSSNEDPTKRLNTQAQNMVLPNLQVGSKVDHPVMSQHQQQPHQLSQQQQVQPSQQSSVVLQQHQAQLLQQNAIHLQQQQEHLQRQQSQPAQQLKAASSLHSVEQHKLKEQTSGGQVASQAQMLNQIFPPSSSQLQQLGLPKSPTHRQGLTGLPIAGSLQQPTLTQTSQVQQAAEYQQALLQSQQQQQQLQLQQLSQPEVQLQLLQKIQQQNMLSQLNPQHQSQLIQQLSQKSQEILQQQILQHQFGGSDSIGQLKQSPSQQAPLNHMTGSLTPQQLVRSHSALAESGDPSSSTAPSTSRISPINSLSRANQGSRNLTDMVATPQIDNLLQEIQSKPDNRIKNDIQSKETVPIHNRHPVSDQLDASSATSFCLDESPREGFSFPPVCLDNNVQVDPRDNFLIAENVDALMPDALLSRGMASGKGMCTLTSGQRDHRDVENELSSAAFSSQSFGVPDMSFKPGCSSDVAVTDAGMPSQGLWNNQTQRMRTFTKVQKRGSVGRSIDITRYRDYDELRHDLACMFGIQGQLEDPYRMDWKLVYVDHENDILLVGDDPWEEFVGCVKSIKILSAAEVQQMSLDGDLGGVPPQTQACSASDDANAWRG.

Residues 127 to 229 (FCKTLTASDT…QLLLGIRRAT (103 aa)) constitute a DNA-binding region (TF-B3). 5 disordered regions span residues 485 to 510 (PVMS…QQSS), 532 to 565 (QEHL…EQTS), 585 to 609 (SQLQ…PIAG), 701 to 720 (SDSI…LNHM), and 732 to 769 (SHSA…SRNL). 2 stretches are compositionally biased toward low complexity: residues 488-510 (SQHQ…QQSS) and 532-552 (QEHL…ASSL). Residues 742-756 (PSSSTAPSTSRISPI) are compositionally biased toward low complexity. The segment covering 757–769 (NSLSRANQGSRNL) has biased composition (polar residues). The PB1 domain occupies 940 to 1024 (RTFTKVQKRG…KSIKILSAAE (85 aa)). The interval 1034–1055 (LGGVPPQTQACSASDDANAWRG) is disordered.

It belongs to the ARF family. As to quaternary structure, homodimers and heterodimers. Expressed in roots, culms, leaves and young panicles.

It localises to the nucleus. Its function is as follows. Auxin response factors (ARFs) are transcriptional factors that bind specifically to the DNA sequence 5'-TGTCTC-3' found in the auxin-responsive promoter elements (AuxREs). This chain is Auxin response factor 16 (ARF16), found in Oryza sativa subsp. japonica (Rice).